We begin with the raw amino-acid sequence, 497 residues long: mRNA cleavage and polyadenylation factor CLP1 (497 aa).

Residues 1–20 (MSIPGLGQIAPQQPTTSTTR) are disordered. ATP contacts are provided by residues glutamate 29 and 168–173 (DSGKTT).

Belongs to the Clp1 family. Clp1 subfamily. Component of a pre-mRNA cleavage factor complex. Interacts directly with PCF11.

The protein resides in the nucleus. Required for endonucleolytic cleavage during polyadenylation-dependent pre-mRNA 3'-end formation. This Chaetomium globosum (strain ATCC 6205 / CBS 148.51 / DSM 1962 / NBRC 6347 / NRRL 1970) (Soil fungus) protein is mRNA cleavage and polyadenylation factor CLP1.